Here is a 502-residue protein sequence, read N- to C-terminus: MPKCKNLLLTSKRRKSKSKRLKLHQHEPESLFPEKEVEEEDEDEGGFKLKIAAPSQEHGVQPLGNLYFNPGAVNVRNTGLGNLQILSDELVLDILGLLGANHLGVLATVTKSFYIFANHEPLWRNLVLEELKGDFLFNGSWRSTYVAAYHPKFKFAGDGESNLKIIDFYSDYLFQSWLCANLEMKPKWLRRDNITRVRGISVEDFITKFEEPNKPVLLEGCLDGWPAIEKWSRDYLTKVVGDVEFAVGPVEMKLEKYFRYSDGAREERPLYLFDPKFAEKVPVLDSEYDVPVYFREDLFGVLGNERPDYRWIIIGPAGSGSSFHIDPNSTSAWNAVITGSKKWVLFPPDVVPPGVHPSPDGAEVACPVSIIEWFMNFYDDTKDWEKKPIECICKAGEVMFVPNGWWHLVINLEESIAITQNYASRSNLLNVLEFLKKPNAKELVSGTTDRENLHDKFKKAIEEAYPGTIQELEKKAEEAKRAEEQRVSFWDSAKTDTFKFSF.

Positions Lys15–Gly45 are disordered. The span at His24 to Lys35 shows a compositional bias: basic and acidic residues. One can recognise an F-box domain in the interval Leu80–Leu126. Residues Glu279–Asn439 enclose the JmjC domain. Fe cation-binding residues include His324, Asp326, and His407.

Belongs to the JARID1 histone demethylase family. Requires Fe(2+) as cofactor. Expressed in inflorescences, roots and siliques, and, at low levels, in leaves and stems.

The protein localises to the nucleus. It carries out the reaction N(omega),N(omega)-dimethyl-L-arginyl-[protein] + 2-oxoglutarate + O2 = N(omega)-methyl-L-arginyl-[protein] + formaldehyde + succinate + CO2. Histone demethylase that demethylates 'Arg-3' (H4R3me) of histone H4 with a specific activity for H4R3me2. Involved in the positive regulation of gene expression. Together with JMJ20, positively regulates seed germination by promoting the removal of repressive histone arginine methylations (e.g. H4R3me2) at GA3ox1 and GA3ox2 to trigger gibberellic acid (GA) biosynthesis. This chain is Arginine-specific demethylase JMJ22, found in Arabidopsis thaliana (Mouse-ear cress).